Consider the following 433-residue polypeptide: Peptidoglycan glycosyltransferase RodA (433 aa).

A run of 12 helical transmembrane segments spans residues 9–29 (FDYL…LFIY), 44–64 (YLKQ…VSMY), 74–94 (TLIF…GRYV), 100–120 (WIGV…AYIL), 158–178 (LGTA…AGFP), 181–201 (LIFA…LPLW), 221–241 (LSLF…VGYL), 249–269 (YWIT…LLGV), 295–315 (WHII…MGYL), 341–361 (WGFV…LHTL), 378–398 (GVLG…MGIM), and 400–420 (ITGI…TAMI).

This sequence belongs to the SEDS family. MrdB/RodA subfamily.

It localises to the cell inner membrane. It carries out the reaction [GlcNAc-(1-&gt;4)-Mur2Ac(oyl-L-Ala-gamma-D-Glu-L-Lys-D-Ala-D-Ala)](n)-di-trans,octa-cis-undecaprenyl diphosphate + beta-D-GlcNAc-(1-&gt;4)-Mur2Ac(oyl-L-Ala-gamma-D-Glu-L-Lys-D-Ala-D-Ala)-di-trans,octa-cis-undecaprenyl diphosphate = [GlcNAc-(1-&gt;4)-Mur2Ac(oyl-L-Ala-gamma-D-Glu-L-Lys-D-Ala-D-Ala)](n+1)-di-trans,octa-cis-undecaprenyl diphosphate + di-trans,octa-cis-undecaprenyl diphosphate + H(+). It functions in the pathway cell wall biogenesis; peptidoglycan biosynthesis. In terms of biological role, peptidoglycan polymerase that is essential for cell wall elongation. The polypeptide is Peptidoglycan glycosyltransferase RodA (Treponema pallidum (strain Nichols)).